A 498-amino-acid chain; its full sequence is ATP synthase subunit beta, chloroplastic (498 aa).

172–179 (GGAGVGKT) is an ATP binding site.

Belongs to the ATPase alpha/beta chains family. In terms of assembly, F-type ATPases have 2 components, CF(1) - the catalytic core - and CF(0) - the membrane proton channel. CF(1) has five subunits: alpha(3), beta(3), gamma(1), delta(1), epsilon(1). CF(0) has four main subunits: a(1), b(1), b'(1) and c(9-12).

The protein localises to the plastid. It is found in the chloroplast thylakoid membrane. It carries out the reaction ATP + H2O + 4 H(+)(in) = ADP + phosphate + 5 H(+)(out). Functionally, produces ATP from ADP in the presence of a proton gradient across the membrane. The catalytic sites are hosted primarily by the beta subunits. This is ATP synthase subunit beta, chloroplastic from Calycanthus floridus var. glaucus (Eastern sweetshrub).